The primary structure comprises 150 residues: Large ribosomal subunit protein bL9 (150 aa).

Belongs to the bacterial ribosomal protein bL9 family.

Its function is as follows. Binds to the 23S rRNA. This chain is Large ribosomal subunit protein bL9, found in Streptococcus pyogenes serotype M5 (strain Manfredo).